The following is a 110-amino-acid chain: Large ribosomal subunit protein P2B (110 aa).

A Phosphoserine modification is found at S29. A Glycyl lysine isopeptide (Lys-Gly) (interchain with G-Cter in ubiquitin) cross-link involves residue K49. Residues 66 to 110 (VPTGGASSAAAGAAGAAAGGDAAEEEKEEEAKEESDDDMGFGLFD) are disordered. Positions 69 to 86 (GGASSAAAGAAGAAAGGD) are enriched in low complexity. Acidic residues predominate over residues 87–104 (AAEEEKEEEAKEESDDDM). S100 carries the phosphoserine modification.

The protein belongs to the eukaryotic ribosomal protein P1/P2 family. Component of the large ribosomal subunit (LSU). Mature yeast ribosomes consist of a small (40S) and a large (60S) subunit. The 40S small subunit contains 1 molecule of ribosomal RNA (18S rRNA) and 33 different proteins (encoded by 57 genes). The large 60S subunit contains 3 rRNA molecules (25S, 5.8S and 5S rRNA) and 46 different proteins (encoded by 81 genes). The 5 acidic ribosomal P-proteins form the stalk structure of the 60S subunit. They are organized as a pentameric complex in which uL10/P0 interacts with 2 heterodimers, P1A-P2B and P1B-P2A. The N-terminus is not modified.

The protein localises to the cytoplasm. In terms of biological role, component of the ribosome, a large ribonucleoprotein complex responsible for the synthesis of proteins in the cell. The small ribosomal subunit (SSU) binds messenger RNAs (mRNAs) and translates the encoded message by selecting cognate aminoacyl-transfer RNA (tRNA) molecules. The large subunit (LSU) contains the ribosomal catalytic site termed the peptidyl transferase center (PTC), which catalyzes the formation of peptide bonds, thereby polymerizing the amino acids delivered by tRNAs into a polypeptide chain. The nascent polypeptides leave the ribosome through a tunnel in the LSU and interact with protein factors that function in enzymatic processing, targeting, and the membrane insertion of nascent chains at the exit of the ribosomal tunnel. In Saccharomyces cerevisiae (strain ATCC 204508 / S288c) (Baker's yeast), this protein is Large ribosomal subunit protein P2B.